A 310-amino-acid polypeptide reads, in one-letter code: Tetrahydromethanopterin S-methyltransferase subunit H (310 aa).

This sequence belongs to the MtrH family. In terms of assembly, the complex is composed of 8 subunits; MtrA, MtrB, MtrC, MtrD, MtrE, MtrF, MtrG and MtrH.

The catalysed reaction is 5-methyl-5,6,7,8-tetrahydromethanopterin + coenzyme M + 2 Na(+)(in) = 5,6,7,8-tetrahydromethanopterin + methyl-coenzyme M + 2 Na(+)(out). Its pathway is one-carbon metabolism; methanogenesis from CO(2); methyl-coenzyme M from 5,10-methylene-5,6,7,8-tetrahydromethanopterin: step 2/2. In terms of biological role, part of a complex that catalyzes the formation of methyl-coenzyme M and tetrahydromethanopterin from coenzyme M and methyl-tetrahydromethanopterin. This is an energy-conserving, sodium-ion translocating step. MtrH catalyzes the transfer of the methyl group from methyl-tetrahydromethanopterin to the corrinoid prosthetic group of MtrA. The sequence is that of Tetrahydromethanopterin S-methyltransferase subunit H from Methanothermobacter thermautotrophicus (strain ATCC 29096 / DSM 1053 / JCM 10044 / NBRC 100330 / Delta H) (Methanobacterium thermoautotrophicum).